A 197-amino-acid chain; its full sequence is Adrenodoxin-like protein 2, mitochondrial (197 aa).

The transit peptide at 1–74 (MVFHRLSRLG…TSFSTTSEKG (74 aa)) directs the protein to the mitochondrion. The 2Fe-2S ferredoxin-type domain occupies 81–184 (INVTFVDKDG…GVRLAIPSAT (104 aa)). 4 residues coordinate [2Fe-2S] cluster: Cys-118, Cys-124, Cys-127, and Cys-165.

It belongs to the adrenodoxin/putidaredoxin family. The cofactor is [2Fe-2S] cluster.

It localises to the mitochondrion. Its function is as follows. Associates with the adrenodoxin reductase MFDR to form an efficient low potential electron transfer chain that is able to reduce cytochrome C. The protein is Adrenodoxin-like protein 2, mitochondrial of Arabidopsis thaliana (Mouse-ear cress).